Consider the following 176-residue polypeptide: NAD(P)H-quinone oxidoreductase subunit 6, chloroplastic (176 aa).

5 helical membrane passes run 10 to 30 (FLLVFLGSGLILGGLGVVLLP), 32 to 52 (PIYSAFSLGLVLVCTSLFYIL), 61 to 81 (AQLLIYVGAINVLIIFAVMFM), 92 to 112 (LWTVGDGVTSMVCTSIFVSLI), and 152 to 172 (FFLPFELISIILLVSLIGAIT).

The protein belongs to the complex I subunit 6 family. As to quaternary structure, NDH is composed of at least 16 different subunits, 5 of which are encoded in the nucleus.

It localises to the plastid. The protein localises to the chloroplast thylakoid membrane. The enzyme catalyses a plastoquinone + NADH + (n+1) H(+)(in) = a plastoquinol + NAD(+) + n H(+)(out). It catalyses the reaction a plastoquinone + NADPH + (n+1) H(+)(in) = a plastoquinol + NADP(+) + n H(+)(out). NDH shuttles electrons from NAD(P)H:plastoquinone, via FMN and iron-sulfur (Fe-S) centers, to quinones in the photosynthetic chain and possibly in a chloroplast respiratory chain. The immediate electron acceptor for the enzyme in this species is believed to be plastoquinone. Couples the redox reaction to proton translocation, and thus conserves the redox energy in a proton gradient. This chain is NAD(P)H-quinone oxidoreductase subunit 6, chloroplastic (ndhG), found in Daucus carota (Wild carrot).